The primary structure comprises 337 residues: MTRLLDASFLLLPVIASTLFGTASAQSTCATKGKPAGKVLQGYWENWDGSANGVHPGFGWTPIENPVIAQNGYNVINAAFPVILSDGTALWEDGMDATVKVATPAEMCQAKAAGATILMSIGGATAGIDLSSSTVADKFISTIVPILKQYNFDGIDIDIETGLVGSGSIGTLSTSQANLIRIIDGVLAQMPANFGLTMAPETAYVTGGSVVYGSIWGSYLPIIKKYVDNGRLWWLNMQYYNGDMYGCSGDSYAAGTVQGFTAQTDCLNNGITIQGTTIKVPYNMQVPGLPAQSGAGGGYMTPALVGQAWDHYNGALKGLMTWSINWDGSKNWTFGDN.

Residues 1–25 (MTRLLDASFLLLPVIASTLFGTASA) form the signal peptide. The GH18 domain occupies 38–337 (KVLQGYWENW…GSKNWTFGDN (300 aa)). Residue Glu-160 is the Proton donor of the active site. Residue Asn-331 is glycosylated (N-linked (GlcNAc...) asparagine).

This sequence belongs to the glycosyl hydrolase 18 family. Chitinase class V subfamily. Monomer.

The protein localises to the secreted. The enzyme catalyses Random endo-hydrolysis of N-acetyl-beta-D-glucosaminide (1-&gt;4)-beta-linkages in chitin and chitodextrins.. Its function is as follows. Secreted chitinase involved in the degradation of chitin, a component of the cell walls of fungi and exoskeletal elements of some animals (including worms and arthropods). Plays a morphogenetic role during apical growth, cell division and differentiation (cell wall morphogenesis). May be involved in the degradation and further assimilation of phytopathogenic fungi, namely mycoparasitism, the major mechanism accounting for the antagonistic activity against phytopathogenic fungi displayed by Trichoderma. In Trichoderma harzianum (Hypocrea lixii), this protein is Endochitinase 37 (chit37).